A 93-amino-acid chain; its full sequence is U12-lycotoxin-Ls1d (93 aa).

An N-terminal signal peptide occupies residues 1-18; sequence MKFAVILLFSLVVLAVAS. A propeptide spanning residues 19–38 is cleaved from the precursor; it reads ESVEEVRREIDIEDLPEQQR.

The protein belongs to the neurotoxin 31 family. Contains 5 disulfide bonds. As to expression, expressed by the venom gland.

It is found in the secreted. The protein is U12-lycotoxin-Ls1d of Lycosa singoriensis (Wolf spider).